The following is a 242-amino-acid chain: Protein odd-skipped-related 1 (242 aa).

3 consecutive C2H2-type zinc fingers follow at residues 128–150, 156–178, and 184–207; these read FICK…ERTH, FHCE…KYIH, and HKCE…SCHH.

Belongs to the Odd C2H2-type zinc-finger protein family.

It is found in the nucleus. Functionally, may function as transcription regulator. Essential for larval development. Required for morphogenesis and function of the digestive tract. This chain is Protein odd-skipped-related 1, found in Caenorhabditis elegans.